Reading from the N-terminus, the 408-residue chain is Peptidase T (408 aa).

A disordered region spans residues 1 to 28 (MKNQLIDRLTRYTTIDTQSDPKSTTTPS). Positions 11–28 (RYTTIDTQSDPKSTTTPS) are enriched in polar residues. Zn(2+) is bound at residue histidine 78. Residue aspartate 80 is part of the active site. Aspartate 140 is a Zn(2+) binding site. Catalysis depends on glutamate 174, which acts as the Proton acceptor. Residues glutamate 175, aspartate 197, and histidine 379 each coordinate Zn(2+).

It belongs to the peptidase M20B family. Zn(2+) is required as a cofactor.

The protein resides in the cytoplasm. The catalysed reaction is Release of the N-terminal residue from a tripeptide.. In terms of biological role, cleaves the N-terminal amino acid of tripeptides. The sequence is that of Peptidase T from Staphylococcus aureus (strain USA300 / TCH1516).